The sequence spans 297 residues: Nucleotide-binding protein Bsph_0448 (297 aa).

19–26 contacts ATP; it reads GMSGAGKT. GTP is bound at residue 70-73; the sequence is DMRG.

This sequence belongs to the RapZ-like family.

Its function is as follows. Displays ATPase and GTPase activities. The sequence is that of Nucleotide-binding protein Bsph_0448 from Lysinibacillus sphaericus (strain C3-41).